Consider the following 469-residue polypeptide: SHC-transforming protein 1 (469 aa).

The interval 1–26 (MNKLSGGGGRRTRVEGGQLGGEEWTR) is disordered. Serine 29 carries the post-translational modification Phosphoserine. Lysine 44 carries the N6-acetyllysine modification. The PID domain occupies 46–229 (MGPGVSYLVR…AGFDGSAWDE (184 aa)). The interval 230–373 (EEEELPDHQY…SMAEQLQGES (144 aa)) is CH1. 3 positions are modified to phosphotyrosine: tyrosine 239, tyrosine 240, and tyrosine 313. Residues 322–344 (ARQAGGGAGPPNPSVNGSAPRDL) are disordered. Residue serine 339 is modified to Phosphoserine. Positions 374-465 (WFHGKLSRRE…GSELCLQQPV (92 aa)) constitute an SH2 domain.

In terms of assembly, interacts with CPNE3; this interaction may mediate the binding of CPNE3 with ERBB2. Interacts with the NPXY motif of tyrosine-phosphorylated IGF1R and INSR in vitro via the PID domain. Once activated, binds to GRB2. Interacts with tyrosine-phosphorylated CD3T and DDR2. Interacts with the N-terminal region of APS. Interacts with phosphorylated LRP1 and IRS4. Interacts with INPP5D/SHIP1 and INPPL1/SHIP2. Interacts with ALK, GAB2, GRB7 and KIT. Interacts with PTPN6/SHP (tyrosine phosphorylated). Identified in a complex containing FGFR4, NCAM1, CDH2, PLCG1, FRS2A, SRC, SHC1, GAP43 and CTTN. Interacts with EPHB1 and GRB2; activates the MAPK/ERK cascade to regulate cell migration. Interacts with PDGFRB (tyrosine-phosphorylated). Interacts with ERBB4. Interacts with TEK/TIE2 (tyrosine-phosphorylated). Interacts with PTK2/FAK1. Interacts with FLT4 (tyrosine-phosphorylated). Interacts with the Trk receptors NTRK1, NTRK2 and NTRK3; in a phosphotyrosine-dependent manner. Interacts with CEACAM1; this interaction is CEACAM1-phosphorylation-dependent and mediates interaction with EGFR or INSR resulting in decrease coupling of SHC1 to the MAPK3/ERK1-MAPK1/ERK2 pathway. Interacts (via PID domain) with PEAK1 (when phosphorylated). Found in a complex with PPP1CA, PPP1CC, SHC1 and PEAK1. In terms of processing, phosphorylated by activated epidermal growth factor receptor. Phosphorylated in response to KIT signaling. Tyrosine phosphorylated in response to FLT3 signaling and by ligand-activated ALK. Tyrosine phosphorylated by TEK/TIE2. Tyrosine phosphorylated by ligand-activated PDGFRB. May be tyrosine phosphorylated by activated PTK2/FAK1. Dephosphorylation by PTPN2 may regulate interaction with GRB2. Phosphorylated in response to FLT4 signaling. Tyrosine phosphorylated by activated PTK2B/PYK2.

The protein resides in the cytoplasm. It localises to the cell junction. The protein localises to the focal adhesion. Functionally, signaling adapter that couples activated growth factor receptors to signaling pathways. Participates in a signaling cascade initiated by activated KIT and KITLG/SCF. Participates in signaling downstream of the angiopoietin receptor TEK/TIE2, and plays a role in the regulation of endothelial cell migration and sprouting angiogenesis. The sequence is that of SHC-transforming protein 1 (Shc1) from Rattus norvegicus (Rat).